Here is a 333-residue protein sequence, read N- to C-terminus: PDZ domain-containing protein GIPC1 (333 aa).

Positions methionine 1–alanine 11 are enriched in basic residues. The segment at methionine 1–arginine 55 is disordered. Over residues leucine 27–alanine 40 the composition is skewed to gly residues. Phosphoserine is present on serine 68. In terms of domain architecture, PDZ spans glutamate 133–glutamate 213. A disordered region spans residues isoleucine 221–arginine 244. Phosphoserine occurs at positions 222, 225, and 232. A compositionally biased stretch (gly residues) spans glycine 228–arginine 240. Threonine 242 is subject to Phosphothreonine. Serine 247 carries the phosphoserine modification.

Belongs to the GIPC family. In terms of assembly, interacts with SDC4/syndecan-4 and SEMA4C/semaphorin-4C. Interacts with RGS19 (C-terminus), GLUT1 (C-terminus), ACTN1, KIF1B, MYO6 and PLEKHG5. As to expression, widely expressed.

It is found in the cytoplasm. Its subcellular location is the membrane. In terms of biological role, may be involved in G protein-linked signaling. The protein is PDZ domain-containing protein GIPC1 (Gipc1) of Rattus norvegicus (Rat).